A 436-amino-acid chain; its full sequence is GTPase Der (436 aa).

EngA-type G domains follow at residues 4–167 (PTVA…PNEI) and 175–351 (IKFS…HAQN). GTP is bound by residues 10-17 (GRPNVGKS), 57-61 (DTGGI), 119-122 (NKVD), 181-188 (GRPNVGKS), 229-233 (DTAGM), and 294-297 (NKWD). The region spanning 352-436 (LRISSSVLND…PIHLIARKRK (85 aa)) is the KH-like domain.

The protein belongs to the TRAFAC class TrmE-Era-EngA-EngB-Septin-like GTPase superfamily. EngA (Der) GTPase family. As to quaternary structure, associates with the 50S ribosomal subunit.

GTPase that plays an essential role in the late steps of ribosome biogenesis. The polypeptide is GTPase Der (Lactococcus lactis subsp. cremoris (strain SK11)).